The sequence spans 85 residues: ATP synthase subunit c (85 aa).

The next 2 membrane-spanning stretches (helical) occupy residues 10–30 (GLALLGKYLGAGLCMGIGAIG) and 65–85 (AVAETTGIYSLLIAFMILLVV).

This sequence belongs to the ATPase C chain family. F-type ATPases have 2 components, F(1) - the catalytic core - and F(0) - the membrane proton channel. F(1) has five subunits: alpha(3), beta(3), gamma(1), delta(1), epsilon(1). F(0) has three main subunits: a(1), b(2) and c(10-14). The alpha and beta chains form an alternating ring which encloses part of the gamma chain. F(1) is attached to F(0) by a central stalk formed by the gamma and epsilon chains, while a peripheral stalk is formed by the delta and b chains.

Its subcellular location is the cell inner membrane. Its function is as follows. F(1)F(0) ATP synthase produces ATP from ADP in the presence of a proton or sodium gradient. F-type ATPases consist of two structural domains, F(1) containing the extramembraneous catalytic core and F(0) containing the membrane proton channel, linked together by a central stalk and a peripheral stalk. During catalysis, ATP synthesis in the catalytic domain of F(1) is coupled via a rotary mechanism of the central stalk subunits to proton translocation. Key component of the F(0) channel; it plays a direct role in translocation across the membrane. A homomeric c-ring of between 10-14 subunits forms the central stalk rotor element with the F(1) delta and epsilon subunits. The protein is ATP synthase subunit c of Thermotoga maritima (strain ATCC 43589 / DSM 3109 / JCM 10099 / NBRC 100826 / MSB8).